The following is a 202-amino-acid chain: Holliday junction branch migration complex subunit RuvA (202 aa).

The tract at residues 1 to 64 (MFAYIRGRLE…EDVISLYGFL (64 aa)) is domain I. The segment at 65–143 (TQEELNVFEL…KEQLTEYAQS (79 aa)) is domain II. The tract at residues 144–152 (EEGGKVLDT) is flexible linker. The interval 152-202 (TDSSKMAEAVSALMVLGYSPAEANKAVSAVYREDMDIETIIKNALKGLARP) is domain III.

The protein belongs to the RuvA family. Homotetramer. Forms an RuvA(8)-RuvB(12)-Holliday junction (HJ) complex. HJ DNA is sandwiched between 2 RuvA tetramers; dsDNA enters through RuvA and exits via RuvB. An RuvB hexamer assembles on each DNA strand where it exits the tetramer. Each RuvB hexamer is contacted by two RuvA subunits (via domain III) on 2 adjacent RuvB subunits; this complex drives branch migration. In the full resolvosome a probable DNA-RuvA(4)-RuvB(12)-RuvC(2) complex forms which resolves the HJ.

The protein resides in the cytoplasm. The RuvA-RuvB-RuvC complex processes Holliday junction (HJ) DNA during genetic recombination and DNA repair, while the RuvA-RuvB complex plays an important role in the rescue of blocked DNA replication forks via replication fork reversal (RFR). RuvA specifically binds to HJ cruciform DNA, conferring on it an open structure. The RuvB hexamer acts as an ATP-dependent pump, pulling dsDNA into and through the RuvAB complex. HJ branch migration allows RuvC to scan DNA until it finds its consensus sequence, where it cleaves and resolves the cruciform DNA. In Acetivibrio thermocellus (strain ATCC 27405 / DSM 1237 / JCM 9322 / NBRC 103400 / NCIMB 10682 / NRRL B-4536 / VPI 7372) (Clostridium thermocellum), this protein is Holliday junction branch migration complex subunit RuvA.